Consider the following 554-residue polypeptide: D-3-phosphoglycerate dehydrogenase (554 aa).

NAD(+) contacts are provided by residues 177-178 (KI), D197, 256-258 (CSR), and D282. Residue R258 is part of the active site. Residue E287 is part of the active site. H305 functions as the Proton donor in the catalytic mechanism. 305-308 (HLGA) is a binding site for NAD(+). The region spanning 482-554 (MLFTLHRDMP…GIRDAYTVKL (73 aa)) is the ACT domain.

The protein belongs to the D-isomer specific 2-hydroxyacid dehydrogenase family.

It carries out the reaction (2R)-3-phosphoglycerate + NAD(+) = 3-phosphooxypyruvate + NADH + H(+). The enzyme catalyses (R)-2-hydroxyglutarate + NAD(+) = 2-oxoglutarate + NADH + H(+). It participates in amino-acid biosynthesis; L-serine biosynthesis; L-serine from 3-phospho-D-glycerate: step 1/3. In terms of biological role, catalyzes the reversible oxidation of 3-phospho-D-glycerate to 3-phosphonooxypyruvate, the first step of the phosphorylated L-serine biosynthesis pathway. Also catalyzes the reversible oxidation of 2-hydroxyglutarate to 2-oxoglutarate. The polypeptide is D-3-phosphoglycerate dehydrogenase (serA) (Synechocystis sp. (strain ATCC 27184 / PCC 6803 / Kazusa)).